We begin with the raw amino-acid sequence, 136 residues long: Ribonuclease YqgF (136 aa).

Belongs to the YqgF nuclease family. As to quaternary structure, monomer; also forms low amounts of dimers. Requires Mn(2+) as cofactor.

It localises to the cytoplasm. Has robust sequence-specific RNase activity, acting as a 5'-3' exo/endonuclease on ssRNA substrates with minimally 3 consecutive adenine bases. Has no detectable nuclease activity on dsRNA, dsDNA or Holliday junction DNA. This is Ribonuclease YqgF from Deinococcus radiodurans (strain ATCC 13939 / DSM 20539 / JCM 16871 / CCUG 27074 / LMG 4051 / NBRC 15346 / NCIMB 9279 / VKM B-1422 / R1).